Consider the following 64-residue polypeptide: Putative neurotoxin 5 (64 aa).

The N-terminal stretch at 1 to 18 (MKNKFAALVITLFVLVLA) is a signal peptide.

Belongs to the scolopendra neurotoxin 6 family. Contains 3 disulfide bonds. Expressed by the venom gland.

The protein resides in the secreted. The sequence is that of Putative neurotoxin 5 from Scolopendra mutilans (Chinese red-headed centipede).